Consider the following 315-residue polypeptide: Methionyl-tRNA formyltransferase (315 aa).

A (6S)-5,6,7,8-tetrahydrofolate-binding site is contributed by 113 to 116 (SLLP).

The protein belongs to the Fmt family.

It carries out the reaction L-methionyl-tRNA(fMet) + (6R)-10-formyltetrahydrofolate = N-formyl-L-methionyl-tRNA(fMet) + (6S)-5,6,7,8-tetrahydrofolate + H(+). In terms of biological role, attaches a formyl group to the free amino group of methionyl-tRNA(fMet). The formyl group appears to play a dual role in the initiator identity of N-formylmethionyl-tRNA by promoting its recognition by IF2 and preventing the misappropriation of this tRNA by the elongation apparatus. This chain is Methionyl-tRNA formyltransferase, found in Enterobacter sp. (strain 638).